The sequence spans 304 residues: Oxygen-dependent coproporphyrinogen-III oxidase (304 aa).

S93 lines the substrate pocket. Residues H97 and H107 each contribute to the a divalent metal cation site. H107 (proton donor) is an active-site residue. 109 to 111 (NVR) is a binding site for substrate. A divalent metal cation is bound by residues H146 and H176. Residues 241 to 276 (YVEFNLVYDRGTLFGLQSGGRTESILMSLPPQVRWG) form an important for dimerization region. 259 to 261 (GGR) is a binding site for substrate.

This sequence belongs to the aerobic coproporphyrinogen-III oxidase family. As to quaternary structure, homodimer. Requires a divalent metal cation as cofactor.

Its subcellular location is the cytoplasm. It catalyses the reaction coproporphyrinogen III + O2 + 2 H(+) = protoporphyrinogen IX + 2 CO2 + 2 H2O. It participates in porphyrin-containing compound metabolism; protoporphyrin-IX biosynthesis; protoporphyrinogen-IX from coproporphyrinogen-III (O2 route): step 1/1. Involved in the heme biosynthesis. Catalyzes the aerobic oxidative decarboxylation of propionate groups of rings A and B of coproporphyrinogen-III to yield the vinyl groups in protoporphyrinogen-IX. The chain is Oxygen-dependent coproporphyrinogen-III oxidase from Pseudomonas syringae pv. syringae (strain B728a).